Here is a 274-residue protein sequence, read N- to C-terminus: Bis(5'-nucleosyl)-tetraphosphatase, symmetrical (274 aa).

This sequence belongs to the Ap4A hydrolase family.

The catalysed reaction is P(1),P(4)-bis(5'-adenosyl) tetraphosphate + H2O = 2 ADP + 2 H(+). In terms of biological role, hydrolyzes diadenosine 5',5'''-P1,P4-tetraphosphate to yield ADP. The sequence is that of Bis(5'-nucleosyl)-tetraphosphatase, symmetrical from Janthinobacterium sp. (strain Marseille) (Minibacterium massiliensis).